A 168-amino-acid polypeptide reads, in one-letter code: MAKCQAVFLLVGALCVLSLAGVANAAENHFKVQGMVYCDTCRIQFMTRISTIMEGATVKLECRNITAGTQTFKAEAVTDKVGQYSIPVNGDFEDDICEIELVKSPNSECSEVSHDVYAKQSAKVSLTSNNGEASDIRSANALGFMRKEPLKECPEVLKELDLYDVKAN.

Positions 1 to 25 (MAKCQAVFLLVGALCVLSLAGVANA) are cleaved as a signal peptide. 3 cysteine pairs are disulfide-bonded: Cys38/Cys109, Cys41/Cys153, and Cys62/Cys97. The N-linked (GlcNAc...) asparagine glycan is linked to Asn64.

Belongs to the Ole e I family.

The protein resides in the secreted. This Chenopodium album (Fat hen) protein is Pollen allergen Che a 1.